The chain runs to 272 residues: Alkaline ceramidase (272 aa).

Helical transmembrane passes span 34–54 (FANT…IMLL) and 61–81 (VNGG…ASTY). A Zn(2+)-binding site is contributed by His-83. The next 4 membrane-spanning stretches (helical) occupy residues 96-116 (LSLV…MKWF), 124-144 (LTLV…LCFL), 148-168 (LNAI…NYEG), and 183-203 (ILAL…LCDF). Residues His-213 and His-217 each contribute to the Zn(2+) site. Residues 214 to 234 (ALFHLLAGLAGYTIFIMFSMI) form a helical membrane-spanning segment. An N-linked (GlcNAc...) asparagine glycan is attached at Asn-256.

The protein belongs to the alkaline ceramidase family. It depends on Zn(2+) as a cofactor.

The protein localises to the membrane. It catalyses the reaction an N-acyl-sphingoid base + H2O = a sphingoid base + a fatty acid. The enzyme catalyses an N-acylsphing-4-enine + H2O = sphing-4-enine + a fatty acid. It carries out the reaction an N-acyl-15-methylhexadecasphing-4-enine + H2O = 15-methylhexadecasphing-4-enine + a fatty acid. It functions in the pathway lipid metabolism; sphingolipid metabolism. Hydrolyzes the sphingolipid ceramide into sphingoid base and free fatty acid. C.elegans contain specific sphingoid bases, which are unique or different in structure compared to the sphingoid bases found in other animals. Two examples of these distinctive compounds are: 15-methylhexadecasphinganine and 15-methylhexadecasphing-4-enine. This Caenorhabditis elegans protein is Alkaline ceramidase.